Consider the following 66-residue polypeptide: Beta-toxin Chui4 (66 aa).

An LCN-type CS-alpha/beta domain is found at 1–66 (KEGYLVELGT…VWPLKNKTCK (66 aa)). 4 disulfides stabilise this stretch: cysteine 12/cysteine 65, cysteine 16/cysteine 41, cysteine 25/cysteine 46, and cysteine 29/cysteine 48.

Belongs to the long (4 C-C) scorpion toxin superfamily. Sodium channel inhibitor family. Beta subfamily. As to expression, expressed by the venom gland.

It localises to the secreted. Functionally, beta toxins bind voltage-independently at site-4 of sodium channels (Nav) and shift the voltage of activation toward more negative potentials thereby affecting sodium channel activation and promoting spontaneous and repetitive firing. Acts on human sodium channel Nav1.6/SCN8A. Also able to weakly shift the activation curves of human Nav1.2/SCN2A and Nav1.4/SCN4A. The chain is Beta-toxin Chui4 from Centruroides huichol (Scorpion).